The following is a 134-amino-acid chain: Small ribosomal subunit protein bS6 (134 aa).

It belongs to the bacterial ribosomal protein bS6 family.

Functionally, binds together with bS18 to 16S ribosomal RNA. The polypeptide is Small ribosomal subunit protein bS6 (Chlorobium phaeobacteroides (strain BS1)).